Here is a 214-residue protein sequence, read N- to C-terminus: ATP-dependent Clp protease proteolytic subunit (214 aa).

S110 acts as the Nucleophile in catalysis. Residue H135 is part of the active site.

This sequence belongs to the peptidase S14 family. In terms of assembly, fourteen ClpP subunits assemble into 2 heptameric rings which stack back to back to give a disk-like structure with a central cavity, resembling the structure of eukaryotic proteasomes.

It is found in the cytoplasm. The catalysed reaction is Hydrolysis of proteins to small peptides in the presence of ATP and magnesium. alpha-casein is the usual test substrate. In the absence of ATP, only oligopeptides shorter than five residues are hydrolyzed (such as succinyl-Leu-Tyr-|-NHMec, and Leu-Tyr-Leu-|-Tyr-Trp, in which cleavage of the -Tyr-|-Leu- and -Tyr-|-Trp bonds also occurs).. In terms of biological role, cleaves peptides in various proteins in a process that requires ATP hydrolysis. Has a chymotrypsin-like activity. Plays a major role in the degradation of misfolded proteins. The protein is ATP-dependent Clp protease proteolytic subunit of Legionella pneumophila (strain Paris).